We begin with the raw amino-acid sequence, 244 residues long: 23S rRNA (guanosine-2'-O-)-methyltransferase RlmB (244 aa).

S-adenosyl-L-methionine is bound by residues glycine 196, isoleucine 216, and leucine 225.

The protein belongs to the class IV-like SAM-binding methyltransferase superfamily. RNA methyltransferase TrmH family. RlmB subfamily. As to quaternary structure, homodimer.

The protein localises to the cytoplasm. The enzyme catalyses guanosine(2251) in 23S rRNA + S-adenosyl-L-methionine = 2'-O-methylguanosine(2251) in 23S rRNA + S-adenosyl-L-homocysteine + H(+). Specifically methylates the ribose of guanosine 2251 in 23S rRNA. In Pectobacterium atrosepticum (strain SCRI 1043 / ATCC BAA-672) (Erwinia carotovora subsp. atroseptica), this protein is 23S rRNA (guanosine-2'-O-)-methyltransferase RlmB.